A 96-amino-acid chain; its full sequence is (4S)-4-hydroxy-5-phosphonooxypentane-2,3-dione isomerase (96 aa).

Residues 2-91 (HVTLVEINVH…MTGPRKKRLF (90 aa)) enclose the ABM domain.

It belongs to the LsrG family. In terms of assembly, homodimer.

It is found in the cytoplasm. It catalyses the reaction (2S)-2-hydroxy-3,4-dioxopentyl phosphate = 3-hydroxy-2,4-dioxopentyl phosphate. Involved in the degradation of phospho-AI-2, thereby terminating induction of the lsr operon and closing the AI-2 signaling cycle. Catalyzes the conversion of (4S)-4-hydroxy-5-phosphonooxypentane-2,3-dione (P-DPD) to 3-hydroxy-5-phosphonooxypentane-2,4-dione (P-HPD). This Shigella flexneri serotype 5b (strain 8401) protein is (4S)-4-hydroxy-5-phosphonooxypentane-2,3-dione isomerase.